The chain runs to 435 residues: MNNIVIVGLQWGDEGKGKIVDYLSENADTVVRFQGGNNAGHTIVVDDEVYKLNLLPSAVLRTGKISIIGNGVALDPYALISEIESLRVKGMDINPNNLMVSESCPLILSVHKEKEKLFEDLNGNHKIGTTNKGIGPCYEDKVGRRAIRLCDLENADELNKRLDTLLNYHNAIRKGLSYRVIKKEEMLREIEEIAEKIIPYRKPVWKILNDFVKEGKKIIFEGAQGTFLDIDHGTYPFVTSSNTIASQVMTGSGLSSNAYVIGVAKAYTTRVGNGPFPTEQRNEVGNSLFTIGKELGTVSNRKRRCGWFDAVLVRQAVQLSGVSSIILTKLDVLDSFDKIKICTGYQYSGKIYDYLPASRSIQEELEPIYEEFPGWKENTQGEKLAEKLPVNLIKYVKRVEELIGIPIHLISAGPKREDVIKLKDFKFSESVLVSY.

GTP contacts are provided by residues 12–18 and 40–42; these read GDEGKGK and GHT. Asp-13 functions as the Proton acceptor in the catalytic mechanism. Asp-13 and Gly-40 together coordinate Mg(2+). IMP is bound by residues 13 to 16, 38 to 41, Thr-130, Arg-144, Gln-224, Thr-239, and Arg-301; these read DEGK and NAGH. The active-site Proton donor is His-41. 297–303 serves as a coordination point for substrate; the sequence is TVSNRKR. GTP contacts are provided by residues Arg-303, 329-331, and 411-413; these read KLD and SAG.

Belongs to the adenylosuccinate synthetase family. Homodimer. Mg(2+) serves as cofactor.

The protein resides in the cytoplasm. It catalyses the reaction IMP + L-aspartate + GTP = N(6)-(1,2-dicarboxyethyl)-AMP + GDP + phosphate + 2 H(+). It participates in purine metabolism; AMP biosynthesis via de novo pathway; AMP from IMP: step 1/2. In terms of biological role, plays an important role in the de novo pathway of purine nucleotide biosynthesis. Catalyzes the first committed step in the biosynthesis of AMP from IMP. This is Adenylosuccinate synthetase from Wolbachia sp. subsp. Brugia malayi (strain TRS).